A 67-amino-acid polypeptide reads, in one-letter code: Protein SlyX homolog (67 aa).

The protein belongs to the SlyX family.

The protein is Protein SlyX homolog of Mesorhizobium japonicum (strain LMG 29417 / CECT 9101 / MAFF 303099) (Mesorhizobium loti (strain MAFF 303099)).